Consider the following 583-residue polypeptide: Bifunctional dihydrofolate reductase-thymidylate synthase (583 aa).

Residues 9 to 229 enclose the DHFR domain; sequence DIYAICACCK…TTLDFVIYSK (221 aa). 36 to 42 is an NADP(+) binding site; the sequence is GLGNEGG. D51 serves as a coordination point for substrate. NADP(+) is bound by residues 104 to 106 and 125 to 128; these read KAS and LSRT. Substrate-binding residues include I165, Y171, and T186. 166 to 173 lines the NADP(+) pocket; sequence GGASVYKE. Residues 298 to 583 are thymidylate synthase; it reads HPEYQYLNII…HDKISMDMAA (286 aa). R320 is a dUMP binding site. Residue C465 is part of the active site. Residues H466, 484-488, N496, and 526-528 contribute to the dUMP site; these read QRSCD and HVY.

This sequence in the N-terminal section; belongs to the dihydrofolate reductase family. In the C-terminal section; belongs to the thymidylate synthase family. Homodimer.

It carries out the reaction (6S)-5,6,7,8-tetrahydrofolate + NADP(+) = 7,8-dihydrofolate + NADPH + H(+). The catalysed reaction is dUMP + (6R)-5,10-methylene-5,6,7,8-tetrahydrofolate = 7,8-dihydrofolate + dTMP. It functions in the pathway cofactor biosynthesis; tetrahydrofolate biosynthesis; 5,6,7,8-tetrahydrofolate from 7,8-dihydrofolate: step 1/1. Its function is as follows. Bifunctional enzyme. Involved in de novo dTMP biosynthesis. Key enzyme in folate metabolism. Catalyzes an essential reaction for de novo glycine and purine synthesis, DNA precursor synthesis, and for the conversion of dUMP to dTMP. The sequence is that of Bifunctional dihydrofolate reductase-thymidylate synthase from Plasmodium chabaudi.